The chain runs to 979 residues: UPF0182 protein BCG_0095 (979 aa).

The next 7 membrane-spanning stretches (helical) occupy residues 19–39 (LVTA…LVDI), 63–83 (LAIV…ALLL), 114–134 (LFGW…ASFD), 174–194 (WLFV…YLFG), 211–231 (VQLA…YWLD), 260–280 (KLVL…AIFL), and 288–308 (MAAA…PLLM). Positions 898–948 (GTGRVATAPGGDAASAPPPGAGGPAPPQAVPPPRTTQPPAAPPRGPDVPPA) are disordered. Residues 902–912 (VATAPGGDAAS) are compositionally biased toward low complexity. Residues 913–946 (APPPGAGGPAPPQAVPPPRTTQPPAAPPRGPDVP) show a composition bias toward pro residues.

The protein belongs to the UPF0182 family.

The protein localises to the cell membrane. This Mycobacterium bovis (strain BCG / Pasteur 1173P2) protein is UPF0182 protein BCG_0095.